Here is a 416-residue protein sequence, read N- to C-terminus: Inositol polyphosphate multikinase (416 aa).

The tract at residues 1–38 (MATEPPSPLRVEAPGPPEMRTSPAIESTPEGTPQPAGG) is disordered. An N-acetylalanine modification is found at Ala-2. At Ser-7 the chain carries Phosphoserine. Lys-75 is an ATP binding site. Substrate is bound at residue Arg-82. ATP-binding positions include 131-133 (EDV) and Asp-144. Substrate contacts are provided by residues Lys-146, 160–167 (KIQQQVSK), and Gln-196. The Nuclear localization signal signature appears at 320-330 (RHRKIYTKKHH). Asp-385 is a binding site for ATP. His-388 provides a ligand contact to substrate.

Belongs to the inositol phosphokinase (IPK) family. The cofactor is Mg(2+). Ubiquitous, with the highest expression in skeletal muscle, liver, placenta, lung, peripheral blood leukocytes, kidney, spleen and colon.

Its subcellular location is the nucleus. The catalysed reaction is 1D-myo-inositol 1,4,5-trisphosphate + 2 ATP = 1D-myo-inositol 1,3,4,5,6-pentakisphosphate + 2 ADP + 2 H(+). The enzyme catalyses 1D-myo-inositol 1,3,4,6-tetrakisphosphate + ATP = 1D-myo-inositol 1,3,4,5,6-pentakisphosphate + ADP + H(+). It carries out the reaction 1-octadecanoyl-2-(5Z,8Z,11Z,14Z)-eicosatetraenoyl-sn-glycero-3-phospho-1D-myo-inositol 4,5-bisphosphate + ATP = 1-octadecanoyl-2-(5Z,8Z,11Z,14Z-eicosatetraenoyl)-sn-glycero-3-phospho-(1D-myo-inositol 3,4,5-triphosphate) + ADP + H(+). It catalyses the reaction a 1,2-diacyl-sn-glycero-3-phospho-(1D-myo-inositol-4,5-bisphosphate) + ATP = a 1,2-diacyl-sn-glycero-3-phospho-(1D-myo-inositol-3,4,5-trisphosphate) + ADP + H(+). The catalysed reaction is 1D-myo-inositol 1,4,5,6-tetrakisphosphate + ATP = 1D-myo-inositol 1,3,4,5,6-pentakisphosphate + ADP + H(+). It participates in phospholipid metabolism; phosphatidylinositol metabolism. With respect to regulation, inhibited by flavonoids that occupy the ATP-binding pocket. Inhibited by myricetin, quercetin, luteolin, kaempferol, isorhamnetin and diosmetin, and to a lesser degree by rhamnetin and apigenin. Functionally, inositol phosphate kinase with a broad substrate specificity. Phosphorylates inositol 1,4,5-trisphosphate (Ins(1,4,5)P3) first to inositol 1,3,4,5-tetrakisphosphate and then to inositol 1,3,4,5,6-pentakisphosphate (Ins(1,3,4,5,6)P5). Phosphorylates inositol 1,3,4,6-tetrakisphosphate (Ins(1,3,4,6)P4). Phosphorylates inositol 1,4,5,6-tetrakisphosphate (Ins(1,4,5,6)P4). Phosphorylates glycero-3-phospho-1D-myo-inositol 4,5-bisphosphate to glycero-3-phospho-1D-myo-inositol 3,4,5-trisphosphate. Plays an important role in MLKL-mediated necroptosis via its role in the biosynthesis of inositol pentakisphosphate (InsP5) and inositol hexakisphosphate (InsP6). Binding of these highly phosphorylated inositol phosphates to MLKL mediates the release of an N-terminal auto-inhibitory region, leading to activation of the kinase. Essential for activated phospho-MLKL to oligomerize and localize to the cell membrane during necroptosis. Required for normal embryonic development, probably via its role in the biosynthesis of inositol 1,3,4,5,6-pentakisphosphate (Ins(1,3,4,5,6)P5) and inositol hexakisphosphate (InsP6). This chain is Inositol polyphosphate multikinase (IPMK), found in Homo sapiens (Human).